Reading from the N-terminus, the 228-residue chain is Delta-type opioid receptor (228 aa).

The chain crosses the membrane as a helical span at residues Gly-1–Val-3. The Cytoplasmic portion of the chain corresponds to Arg-4–Asn-13. Residues Ile-14 to Leu-38 form a helical membrane-spanning segment. Residues Met-39–Lys-50 are Extracellular-facing. Residues Cys-49 and Cys-126 are joined by a disulfide bond. The chain crosses the membrane as a helical span at residues Ala-51–Val-72. At Asp-73–Ala-91 the chain is on the cytoplasmic side. Residues Lys-92–Met-114 form a helical membrane-spanning segment. Residues Ala-115 to Ser-134 lie on the Extracellular side of the membrane. Residues Trp-135–Leu-166 form a helical membrane-spanning segment. At Arg-167 to Arg-189 the chain is on the cytoplasmic side. The helical transmembrane segment at Met-190–Trp-212 threads the bilayer. At Thr-213–Ala-227 the chain is on the extracellular side.

This sequence belongs to the G-protein coupled receptor 1 family. May form homooligomers. Forms a heterodimer with OPRM1. Interacts with GPRASP1. Interacts with RTP4; the interaction promotes cell surface localization of the OPRD1-OPRM1 heterodimer. Ubiquitinated. A basal ubiquitination seems not to be related to degradation. Ubiquitination is increased upon formation of OPRM1:OPRD1 oligomers leading to proteasomal degradation; the ubiquitination is diminished by RTP4. Detected in myenteric plexus and smooth muscle (at protein level). Detected in brain and intestine.

Its subcellular location is the cell membrane. Functionally, G-protein coupled receptor that functions as a receptor for endogenous enkephalins and for a subset of other opioids. Ligand binding causes a conformation change that triggers signaling via guanine nucleotide-binding proteins (G proteins) and modulates the activity of down-stream effectors, such as adenylate cyclase. Signaling leads to the inhibition of adenylate cyclase activity. Inhibits neurotransmitter release by reducing calcium ion currents and increasing potassium ion conductance. Plays a role in the perception of pain and in opiate-mediated analgesia. Plays a role in developing analgesic tolerance to morphine. The chain is Delta-type opioid receptor (OPRD1) from Sus scrofa (Pig).